Reading from the N-terminus, the 88-residue chain is ATP synthase F(0) complex subunit f, mitochondrial (88 aa).

Ala-2 is subject to N-acetylalanine. Ser-3 carries the phosphoserine modification. Lys-16 is subject to N6-acetyllysine. Residues 62–79 (MVLAAYVVFNYCRSYKEL) traverse the membrane as a helical segment.

Belongs to the ATPase F chain family. In terms of assembly, component of the ATP synthase complex composed at least of ATP5F1A/subunit alpha, ATP5F1B/subunit beta, ATP5MC1/subunit c (homooctomer), MT-ATP6/subunit a, MT-ATP8/subunit 8, ATP5ME/subunit e, ATP5MF/subunit f, ATP5MG/subunit g, ATP5MK/subunit k, ATP5MJ/subunit j, ATP5F1C/subunit gamma, ATP5F1D/subunit delta, ATP5F1E/subunit epsilon, ATP5PF/subunit F6, ATP5PB/subunit b, ATP5PD/subunit d, ATP5PO/subunit OSCP. ATP synthase complex consists of a soluble F(1) head domain (subunits alpha(3) and beta(3)) - the catalytic core - and a membrane F(0) domain - the membrane proton channel (subunits c, a, 8, e, f, g, k and j). These two domains are linked by a central stalk (subunits gamma, delta, and epsilon) rotating inside the F1 region and a stationary peripheral stalk (subunits F6, b, d, and OSCP).

Its subcellular location is the mitochondrion. It is found in the mitochondrion inner membrane. In terms of biological role, subunit f, of the mitochondrial membrane ATP synthase complex (F(1)F(0) ATP synthase or Complex V) that produces ATP from ADP in the presence of a proton gradient across the membrane which is generated by electron transport complexes of the respiratory chain. ATP synthase complex consist of a soluble F(1) head domain - the catalytic core - and a membrane F(1) domain - the membrane proton channel. These two domains are linked by a central stalk rotating inside the F(1) region and a stationary peripheral stalk. During catalysis, ATP synthesis in the catalytic domain of F(1) is coupled via a rotary mechanism of the central stalk subunits to proton translocation. In vivo, can only synthesize ATP although its ATP hydrolase activity can be activated artificially in vitro. Part of the complex F(0) domain. The sequence is that of ATP synthase F(0) complex subunit f, mitochondrial from Sus scrofa (Pig).